The primary structure comprises 388 residues: MRYLTAGESHGPSLTAIIEGIPAGLTLHPADIDHELQRRQGGYGRGARMSIETDRVQISSGVRHGKTTGAPITLTVINKDHQKWLDVMAVGDIEETLKLKRRVKHPRPGHADLVGGIKYHFNDLRDALERSSARETTMRVAVGAVAKRILAELGIDMLHHILIFGGITITIPSKLSFRELQERALHSELSIVNPKQEEEIKTYIDKIKKEGDTIGGIIETIVQGVPAGLGSYVQWDKKLDAKLAQAVLSINAFKGVEFGVGFDMGFQKGSQVMDEITWTPTQGYGRQTNHLGGFEGGMTTGQPIVVKGVMKPIPTLYKPLMSVDIDSHEPYKATVERSDPTALPAAGVIMENVVATVLAKEILETFSSTTMSELQKAFSDYRAYVKQF.

2 residues coordinate NADP(+): Arg39 and Arg45. Residues 130-132, 251-252, Gly296, 311-315, and Arg337 each bind FMN; these read RSS, NA, and KPIPT.

The protein belongs to the chorismate synthase family. As to quaternary structure, homotetramer. The cofactor is FMNH2.

The catalysed reaction is 5-O-(1-carboxyvinyl)-3-phosphoshikimate = chorismate + phosphate. The protein operates within metabolic intermediate biosynthesis; chorismate biosynthesis; chorismate from D-erythrose 4-phosphate and phosphoenolpyruvate: step 7/7. Functionally, catalyzes the anti-1,4-elimination of the C-3 phosphate and the C-6 proR hydrogen from 5-enolpyruvylshikimate-3-phosphate (EPSP) to yield chorismate, which is the branch point compound that serves as the starting substrate for the three terminal pathways of aromatic amino acid biosynthesis. This reaction introduces a second double bond into the aromatic ring system. The chain is Chorismate synthase from Streptococcus pyogenes serotype M49 (strain NZ131).